A 179-amino-acid polypeptide reads, in one-letter code: Large ribosomal subunit protein uL6 (179 aa).

It belongs to the universal ribosomal protein uL6 family. As to quaternary structure, part of the 50S ribosomal subunit.

Its function is as follows. This protein binds to the 23S rRNA, and is important in its secondary structure. It is located near the subunit interface in the base of the L7/L12 stalk, and near the tRNA binding site of the peptidyltransferase center. The polypeptide is Large ribosomal subunit protein uL6 (Geobacter metallireducens (strain ATCC 53774 / DSM 7210 / GS-15)).